We begin with the raw amino-acid sequence, 1124 residues long: EGF and laminin G domain-containing protein (1124 aa).

Over 1-1055 (RTFVKKYSAS…KLQAEDDDKT (1055 aa)) the chain is Extracellular. Laminin G-like domains are found at residues 8-203 (SASR…NQKC) and 210-369 (PFTF…WSGC). 9 cysteine pairs are disulfide-bonded: C167-C203, C342-C369, C375-C386, C380-C395, C397-C412, C761-C788, C792-C803, C797-C812, and C814-C824. The 43-residue stretch at 371–413 (ITDFCIFSPCLHGGECTQTGKTFSCGCSGTGYDKGPNSLSVCQ) folds into the EGF-like 1 domain. Residues 621–788 (NTATFVNEDG…GEAVFVKSGC (168 aa)) enclose the Laminin G-like 3 domain. In terms of domain architecture, EGF-like 2 spans 789 to 825 (GAACENNSCKNHAKCLDNYNVYFCDCSKTPYYGYFCH). The segment at 1011–1047 (RATCGPEPKVPEIPTPRPVGQRADVSTPQGITTNPKL) is disordered. The span at 1034-1046 (DVSTPQGITTNPK) shows a compositional bias: polar residues. A helical transmembrane segment spans residues 1056-1076 (AIIVVVVLILVLLLVVLILVI). At 1077 to 1124 (YWYWARHKGEYHTHEDDEELKATDPYIEPAAPRKLKGEEPEKKKEWYI) the chain is on the cytoplasmic side. The tract at residues 1090–1124 (HEDDEELKATDPYIEPAAPRKLKGEEPEKKKEWYI) is disordered. Basic and acidic residues predominate over residues 1111–1124 (LKGEEPEKKKEWYI).

As to expression, component of the acid-insoluble organic matrix of the aragonitic skeleton (at protein level).

Its subcellular location is the membrane. This chain is EGF and laminin G domain-containing protein, found in Acropora millepora (Staghorn coral).